The following is a 199-amino-acid chain: Holliday junction branch migration complex subunit RuvA (199 aa).

The domain I stretch occupies residues M1–R64. The interval T65 to E143 is domain II. The flexible linker stretch occupies residues A144–A154. Residues A154–K199 are domain III.

This sequence belongs to the RuvA family. In terms of assembly, homotetramer. Forms an RuvA(8)-RuvB(12)-Holliday junction (HJ) complex. HJ DNA is sandwiched between 2 RuvA tetramers; dsDNA enters through RuvA and exits via RuvB. An RuvB hexamer assembles on each DNA strand where it exits the tetramer. Each RuvB hexamer is contacted by two RuvA subunits (via domain III) on 2 adjacent RuvB subunits; this complex drives branch migration. In the full resolvosome a probable DNA-RuvA(4)-RuvB(12)-RuvC(2) complex forms which resolves the HJ.

It is found in the cytoplasm. In terms of biological role, the RuvA-RuvB-RuvC complex processes Holliday junction (HJ) DNA during genetic recombination and DNA repair, while the RuvA-RuvB complex plays an important role in the rescue of blocked DNA replication forks via replication fork reversal (RFR). RuvA specifically binds to HJ cruciform DNA, conferring on it an open structure. The RuvB hexamer acts as an ATP-dependent pump, pulling dsDNA into and through the RuvAB complex. HJ branch migration allows RuvC to scan DNA until it finds its consensus sequence, where it cleaves and resolves the cruciform DNA. The sequence is that of Holliday junction branch migration complex subunit RuvA from Geobacter metallireducens (strain ATCC 53774 / DSM 7210 / GS-15).